A 599-amino-acid chain; its full sequence is NADH-quinone oxidoreductase subunit C/D (599 aa).

A compositionally biased stretch (polar residues) spans methionine 1–glutamine 15. The segment at methionine 1–aspartate 21 is disordered. An NADH dehydrogenase I subunit C region spans residues methionine 1–glutamate 189. The interval aspartate 213 to arginine 599 is NADH dehydrogenase I subunit D.

In the N-terminal section; belongs to the complex I 30 kDa subunit family. The protein in the C-terminal section; belongs to the complex I 49 kDa subunit family. In terms of assembly, NDH-1 is composed of 13 different subunits. Subunits NuoB, CD, E, F, and G constitute the peripheral sector of the complex.

It localises to the cell inner membrane. It catalyses the reaction a quinone + NADH + 5 H(+)(in) = a quinol + NAD(+) + 4 H(+)(out). Its function is as follows. NDH-1 shuttles electrons from NADH, via FMN and iron-sulfur (Fe-S) centers, to quinones in the respiratory chain. The immediate electron acceptor for the enzyme in this species is believed to be ubiquinone. Couples the redox reaction to proton translocation (for every two electrons transferred, four hydrogen ions are translocated across the cytoplasmic membrane), and thus conserves the redox energy in a proton gradient. The protein is NADH-quinone oxidoreductase subunit C/D of Erwinia tasmaniensis (strain DSM 17950 / CFBP 7177 / CIP 109463 / NCPPB 4357 / Et1/99).